A 173-amino-acid chain; its full sequence is Acireductone dioxygenase 1 (173 aa).

Histidine 96, histidine 98, glutamate 102, and histidine 140 together coordinate Fe(2+). Positions 96, 98, 102, and 140 each coordinate Ni(2+).

The protein belongs to the acireductone dioxygenase (ARD) family. Monomer. Requires Fe(2+) as cofactor. It depends on Ni(2+) as a cofactor.

The enzyme catalyses 1,2-dihydroxy-5-(methylsulfanyl)pent-1-en-3-one + O2 = 3-(methylsulfanyl)propanoate + CO + formate + 2 H(+). It carries out the reaction 1,2-dihydroxy-5-(methylsulfanyl)pent-1-en-3-one + O2 = 4-methylsulfanyl-2-oxobutanoate + formate + 2 H(+). It functions in the pathway amino-acid biosynthesis; L-methionine biosynthesis via salvage pathway; L-methionine from S-methyl-5-thio-alpha-D-ribose 1-phosphate: step 5/6. Functionally, catalyzes 2 different reactions between oxygen and the acireductone 1,2-dihydroxy-3-keto-5-methylthiopentene (DHK-MTPene) depending upon the metal bound in the active site. Fe-containing acireductone dioxygenase (Fe-ARD) produces formate and 2-keto-4-methylthiobutyrate (KMTB), the alpha-ketoacid precursor of methionine in the methionine recycle pathway. Ni-containing acireductone dioxygenase (Ni-ARD) produces methylthiopropionate, carbon monoxide and formate, and does not lie on the methionine recycle pathway. The sequence is that of Acireductone dioxygenase 1 from Pectobacterium atrosepticum (strain SCRI 1043 / ATCC BAA-672) (Erwinia carotovora subsp. atroseptica).